A 486-amino-acid polypeptide reads, in one-letter code: MEKSKNIWSLILTEIKKELSEEEFYVWFENLCFLESIGDNIKISTPNLFHKNQIEKRFTKKIKEILIKNGYNNIVIVFTNQPPKTHSNKQETKNPALNETFSKFDKLKEKTTSKEAIQNIQDRIKMYIKKEEEEPTNFKNPFLKKRYTFENFIIGPNNKLAYNASLSISKNPGKKYNPCLIYGGVGLGKTHLLQSIGNKTEELHHNLKILYVTAENFLNEFVESIKTHETKKFKKKYRYLDMLLIDDIHDLQKKEGIQEELFHTFNALYEDNKQLVFTCDRSPSELTNFTDRLKSRFTRGLNVDISKPNFELRAAIVEKKAEEDGINVPKNILNLVAQKVTTNVRDLEAAVTKLKAYIDLDNIEIDIEIVEKIIKEIIIYEKETTNEPNNKINIENIKKILLRELKITHKDIEGHSKKPEITKARHIYAYLLRNFTELSTVEIGKIIGGKTHSTVLYSINKIDRDRNNDKEINNLITELMNKIKKN.

Positions 1-79 (MEKSKNIWSL…GYNNIVIVFT (79 aa)) are domain I, interacts with DnaA modulators. The domain II stretch occupies residues 79-141 (TNQPPKTHSN…EEEPTNFKNP (63 aa)). Residues 142-358 (FLKKRYTFEN…AAVTKLKAYI (217 aa)) are domain III, AAA+ region. ATP-binding residues include Gly-186, Gly-188, Lys-189, and Thr-190. Residues 359 to 486 (DLDNIEIDIE…TELMNKIKKN (128 aa)) are domain IV, binds dsDNA.

It belongs to the DnaA family. As to quaternary structure, oligomerizes as a right-handed, spiral filament on DNA at oriC.

It is found in the cytoplasm. Plays an essential role in the initiation and regulation of chromosomal replication. ATP-DnaA binds to the origin of replication (oriC) to initiate formation of the DNA replication initiation complex once per cell cycle. Binds the DnaA box (a 9 base pair repeat at the origin) and separates the double-stranded (ds)DNA. Forms a right-handed helical filament on oriC DNA; dsDNA binds to the exterior of the filament while single-stranded (ss)DNA is stabiized in the filament's interior. The ATP-DnaA-oriC complex binds and stabilizes one strand of the AT-rich DNA unwinding element (DUE), permitting loading of DNA polymerase. After initiation quickly degrades to an ADP-DnaA complex that is not apt for DNA replication. Binds acidic phospholipids. Its function is as follows. Binds to the bpuR promoter, possibly at 5'-TTTTTAAA-3'. In Borreliella burgdorferi (strain ATCC 35210 / DSM 4680 / CIP 102532 / B31) (Borrelia burgdorferi), this protein is Chromosomal replication initiator protein DnaA.